The sequence spans 316 residues: Actinorhodin polyketide synthase bifunctional cyclase/dehydratase (316 aa).

It participates in antibiotic biosynthesis; actinorhodin biosynthesis. Functionally, is needed for correct cyclization of the oligoketide leading to isochromanequinone formation. This Streptomyces coelicolor (strain ATCC BAA-471 / A3(2) / M145) protein is Actinorhodin polyketide synthase bifunctional cyclase/dehydratase.